The sequence spans 132 residues: Small ribosomal subunit protein uS8c (132 aa).

It belongs to the universal ribosomal protein uS8 family. Part of the 30S ribosomal subunit.

The protein resides in the plastid. It localises to the chloroplast. In terms of biological role, one of the primary rRNA binding proteins, it binds directly to 16S rRNA central domain where it helps coordinate assembly of the platform of the 30S subunit. This chain is Small ribosomal subunit protein uS8c (rps8), found in Guillardia theta (Cryptophyte).